We begin with the raw amino-acid sequence, 249 residues long: ATP synthase subunit a, chloroplastic (249 aa).

Helical transmembrane passes span 40–60 (QVLI…IVAV), 97–117 (VPFI…GALL), 136–156 (INTT…AGLS), 201–221 (LVVV…VMFL), and 222–242 (GLFT…AYIG).

It belongs to the ATPase A chain family. In terms of assembly, F-type ATPases have 2 components, CF(1) - the catalytic core - and CF(0) - the membrane proton channel. CF(1) has five subunits: alpha(3), beta(3), gamma(1), delta(1), epsilon(1). CF(0) has four main subunits: a, b, b' and c.

It localises to the plastid. Its subcellular location is the chloroplast thylakoid membrane. Key component of the proton channel; it plays a direct role in the translocation of protons across the membrane. The chain is ATP synthase subunit a, chloroplastic from Manihot esculenta (Cassava).